We begin with the raw amino-acid sequence, 810 residues long: Exocyst complex component 6B (810 aa).

Residues 79–118 are a coiled coil; it reads TELLKVRGEAQKLKNQVTDTNRKLQHEGKELVIAMEELKQ. Positions 258–282 are disordered; sequence ESTSPKSEQDSGILDVEDEEDDEEV. A compositionally biased stretch (acidic residues) spans 272–282; sequence DVEDEEDDEEV.

This sequence belongs to the SEC15 family. In terms of assembly, the exocyst complex is composed of SEC3, SEC5, SEC6, SEC8, SEC10, SEC15, EXO70 and EXO84.

Component of the exocyst complex involved in the docking of exocytic vesicles with fusion sites on the plasma membrane. This is Exocyst complex component 6B (Exoc6b) from Mus musculus (Mouse).